Here is a 271-residue protein sequence, read N- to C-terminus: Short-chain dehydrogenase ptmH (271 aa).

Residues Ile8, Thr34, Lys40, Asp56, Asn84, Tyr148, Lys152, Val181, and Thr183 each coordinate NADP(+). Tyr148 acts as the Proton acceptor in catalysis. Lys152 functions as the Lowers pKa of active site Tyr in the catalytic mechanism.

The protein belongs to the short-chain dehydrogenases/reductases (SDR) family.

It functions in the pathway secondary metabolite biosynthesis. In terms of biological role, short-chain dehydrogenase; part of the gene cluster that mediates the biosynthesis of the indole diterpenes penitrems. The geranylgeranyl diphosphate (GGPP) synthase ptmG catalyzes the first step in penitrem biosynthesis via conversion of farnesyl pyrophosphate and isopentyl pyrophosphate into geranylgeranyl pyrophosphate (GGPP). Condensation of indole-3-glycerol phosphate with GGPP by the prenyl transferase ptmC then forms 3-geranylgeranylindole (3-GGI). Epoxidation by the FAD-dependent monooxygenase ptmM leads to a epoxidized-GGI that is substrate of the terpene cyclase ptmB for cyclization to yield paspaline. Paspaline is subsequently converted to 13-desoxypaxilline by the cytochrome P450 monooxygenase ptmP, the latter being then converted to paxilline by the cytochrome P450 monooxygenase ptmQ. Paxilline is converted to beta-paxitriol via C-10 ketoreduction by the short-chain dehydrogenase ptmH which can be monoprenylated at the C-20 by the indole diterpene prenyltransferase ptmD. A two-step elimination (acetylation and elimination) process performed by the O-acetyltransferase ptmV and ptmI leads to the production of the prenylated form of penijanthine. The FAD-linked oxidoreductase ptmO then converts the prenylated form of penijanthine into PC-M5 which is in turn transformed into PC-M4 by the aromatic dimethylallyltransferase ptmE. Five sequential oxidative transformations performed by the cytochrome P450 monooxygenases ptmK, ptmU, ptmL, ptmN and ptmJ yield the various penitrem compounds. PtmK, ptmU and ptmM are involved in the formation of the key bicyclic ring of penitrem C via the formation of the intermediates secopenitrem D and penitrem D. PtmL catalyzes the epoxidation of penitrem D and C to yield penitrem B and F, respectively. PtmJ catalyzes the last benzylic hydroxylation to convert penitrem B to prenitrem E and penitrem F to penitrem A. The chain is Short-chain dehydrogenase ptmH from Penicillium ochrochloron.